The primary structure comprises 56 residues: Small ribosomal subunit protein uS14 (56 aa).

Cysteine 21, cysteine 24, cysteine 39, and cysteine 42 together coordinate Zn(2+).

The protein belongs to the universal ribosomal protein uS14 family. It depends on Zn(2+) as a cofactor.

This chain is Small ribosomal subunit protein uS14 (RPS29), found in Debaryomyces hansenii (strain ATCC 36239 / CBS 767 / BCRC 21394 / JCM 1990 / NBRC 0083 / IGC 2968) (Yeast).